Consider the following 141-residue polypeptide: ATP synthase epsilon chain 1 (141 aa).

The protein belongs to the ATPase epsilon chain family. As to quaternary structure, F-type ATPases have 2 components, CF(1) - the catalytic core - and CF(0) - the membrane proton channel. CF(1) has five subunits: alpha(3), beta(3), gamma(1), delta(1), epsilon(1). CF(0) has three main subunits: a, b and c.

It localises to the cell inner membrane. Produces ATP from ADP in the presence of a proton gradient across the membrane. In Paraburkholderia xenovorans (strain LB400), this protein is ATP synthase epsilon chain 1.